The following is a 996-amino-acid chain: MYLLFLFLLFPTVFSLNQDGFILQQVKLSLDDPDSYLSSWNSNDASPCRWSGVSCAGDFSSVTSVDLSSANLAGPFPSVICRLSNLAHLSLYNNSINSTLPLNIAACKSLQTLDLSQNLLTGELPQTLADIPTLVHLDLTGNNFSGDIPASFGKFENLEVLSLVYNLLDGTIPPFLGNISTLKMLNLSYNPFSPSRIPPEFGNLTNLEVMWLTECHLVGQIPDSLGQLSKLVDLDLALNDLVGHIPPSLGGLTNVVQIELYNNSLTGEIPPELGNLKSLRLLDASMNQLTGKIPDELCRVPLESLNLYENNLEGELPASIALSPNLYEIRIFGNRLTGGLPKDLGLNSPLRWLDVSENEFSGDLPADLCAKGELEELLIIHNSFSGVIPESLADCRSLTRIRLAYNRFSGSVPTGFWGLPHVNLLELVNNSFSGEISKSIGGASNLSLLILSNNEFTGSLPEEIGSLDNLNQLSASGNKFSGSLPDSLMSLGELGTLDLHGNQFSGELTSGIKSWKKLNELNLADNEFTGKIPDEIGSLSVLNYLDLSGNMFSGKIPVSLQSLKLNQLNLSYNRLSGDLPPSLAKDMYKNSFIGNPGLCGDIKGLCGSENEAKKRGYVWLLRSIFVLAAMVLLAGVAWFYFKYRTFKKARAMERSKWTLMSFHKLGFSEHEILESLDEDNVIGAGASGKVYKVVLTNGETVAVKRLWTGSVKETGDCDPEKGYKPGVQDEAFEAEVETLGKIRHKNIVKLWCCCSTRDCKLLVYEYMPNGSLGDLLHSSKGGMLGWQTRFKIILDAAEGLSYLHHDSVPPIVHRDIKSNNILIDGDYGARVADFGVAKAVDLTGKAPKSMSVIAGSCGYIAPEYAYTLRVNEKSDIYSFGVVILEIVTRKRPVDPELGEKDLVKWVCSTLDQKGIEHVIDPKLDSCFKEEISKILNVGLLCTSPLPINRPSMRRVVKMLQEIGGGDEDSLHKIRDDKDGKLTPYYNEDTSDQGSIA.

The first 15 residues, 1-15 (MYLLFLFLLFPTVFS), serve as a signal peptide directing secretion. At 16-618 (LNQDGFILQQ…ENEAKKRGYV (603 aa)) the chain is on the extracellular side. LRR repeat units follow at residues 59-83 (FSSV…ICRL), 84-107 (SNLA…IAAC), 109-131 (SLQT…LADI), 133-154 (TLVH…SFGK), 155-178 (FENL…FLGN), 179-203 (ISTL…EFGN), 205-228 (TNLE…LGQL), 229-252 (SKLV…LGGL), 253-276 (TNVV…LGNL), 278-299 (SLRL…ELCR), 300-323 (VPLE…IALS), 325-347 (NLYE…LGLN), 348-371 (SPLR…LCAK), 373-395 (ELEE…LADC), 396-419 (RSLT…FWGL), 421-443 (HVNL…IGGA), 444-467 (SNLS…IGSL), 468-491 (DNLN…LMSL), 493-515 (ELGT…IKSW), 516-539 (KKLN…IGSL), 541-562 (VLNY…SLQS), and 563-586 (LKLN…LAKD). N-linked (GlcNAc...) asparagine glycosylation is found at asparagine 93 and asparagine 97. N-linked (GlcNAc...) asparagine glycosylation is found at asparagine 143, asparagine 178, asparagine 186, and asparagine 203. N-linked (GlcNAc...) asparagine glycosylation is present at asparagine 262. Asparagine 429 and asparagine 445 each carry an N-linked (GlcNAc...) asparagine glycan. The N-linked (GlcNAc...) asparagine glycan is linked to asparagine 569. The helical transmembrane segment at 619–639 (WLLRSIFVLAAMVLLAGVAWF) threads the bilayer. Over 640–996 (YFKYRTFKKA…EDTSDQGSIA (357 aa)) the chain is Cytoplasmic. Residues 676–962 (LDEDNVIGAG…RRVVKMLQEI (287 aa)) form the Protein kinase domain. ATP is bound by residues 682–690 (IGAGASGKV) and lysine 704. Phosphotyrosine occurs at positions 764 and 802. Aspartate 815 serves as the catalytic Proton acceptor. Residue serine 851 is modified to Phosphoserine. A phosphotyrosine mark is found at tyrosine 859 and tyrosine 866. Threonine 867 is modified (phosphothreonine). The tract at residues 967 to 996 (EDSLHKIRDDKDGKLTPYYNEDTSDQGSIA) is disordered. The segment covering 968 to 980 (DSLHKIRDDKDGK) has biased composition (basic and acidic residues).

This sequence belongs to the protein kinase superfamily. Ser/Thr protein kinase family.

It is found in the cell membrane. It carries out the reaction L-seryl-[protein] + ATP = O-phospho-L-seryl-[protein] + ADP + H(+). It catalyses the reaction L-threonyl-[protein] + ATP = O-phospho-L-threonyl-[protein] + ADP + H(+). This chain is Receptor-like protein kinase HSL1 (HSL1), found in Arabidopsis thaliana (Mouse-ear cress).